The following is a 548-amino-acid chain: Membrane protein insertase YidC (548 aa).

A helical membrane pass occupies residues 6-26 (NLLVIALLFVSFMIWQAWEQD). The tract at residues 28–54 (NPQPQTQQTTQTTTTAAGSAADQGVPA) is disordered. Over residues 29–42 (PQPQTQQTTQTTTT) the composition is skewed to low complexity. The next 4 helical transmembrane spans lie at 350–370 (FVGN…GIMY), 424–444 (FPLI…MGSI), 458–478 (LSAQ…MFFI), and 499–519 (PVIF…YYIV).

It belongs to the OXA1/ALB3/YidC family. Type 1 subfamily. As to quaternary structure, interacts with the Sec translocase complex via SecD. Specifically interacts with transmembrane segments of nascent integral membrane proteins during membrane integration.

It localises to the cell inner membrane. In terms of biological role, required for the insertion and/or proper folding and/or complex formation of integral membrane proteins into the membrane. Involved in integration of membrane proteins that insert both dependently and independently of the Sec translocase complex, as well as at least some lipoproteins. Aids folding of multispanning membrane proteins. This is Membrane protein insertase YidC from Salmonella arizonae (strain ATCC BAA-731 / CDC346-86 / RSK2980).